Here is a 212-residue protein sequence, read N- to C-terminus: 3,4-dihydroxy-2-butanone 4-phosphate synthase (212 aa).

D-ribulose 5-phosphate-binding positions include R37–E38, D42, R150–T154, and E174. E38 provides a ligand contact to Mg(2+). A Mg(2+)-binding site is contributed by H153.

Belongs to the DHBP synthase family. As to quaternary structure, homodimer. It depends on Mg(2+) as a cofactor. Requires Mn(2+) as cofactor.

The catalysed reaction is D-ribulose 5-phosphate = (2S)-2-hydroxy-3-oxobutyl phosphate + formate + H(+). The protein operates within cofactor biosynthesis; riboflavin biosynthesis; 2-hydroxy-3-oxobutyl phosphate from D-ribulose 5-phosphate: step 1/1. Catalyzes the conversion of D-ribulose 5-phosphate to formate and 3,4-dihydroxy-2-butanone 4-phosphate. In Shewanella piezotolerans (strain WP3 / JCM 13877), this protein is 3,4-dihydroxy-2-butanone 4-phosphate synthase.